Reading from the N-terminus, the 549-residue chain is Plant intracellular Ras-group-related LRR protein 4 (549 aa).

The span at 119–140 shows a compositional bias: low complexity; the sequence is SPSSNGSVSSRPPLPPATTTAA. A disordered region spans residues 119-167; that stretch reads SPSSNGSVSSRPPLPPATTTAARSDSQSSLNFSERAPVRPKDMVSRDDS. Over residues 141–150 the composition is skewed to polar residues; that stretch reads RSDSQSSLNF. Over residues 154-167 the composition is skewed to basic and acidic residues; the sequence is APVRPKDMVSRDDS. Phosphoserine is present on S167. 11 LRR repeats span residues 245-268, 269-291, 293-313, 314-337, 339-360, 362-383, 384-406, 407-430, 432-454, 455-476, and 478-500; these read LSSL…IGGL, SSLT…IGEL, NLVY…AFSR, LVRL…IGSL, SLKK…IGGC, SLIE…IGKI, TTLE…MSSL, ASLK…CFAT, LVKL…IGNL, EMLE…SFKM, and TKLR…IAEK. The GVYW; degenerate motif lies at 501–508; it reads GPQAVVQY.

The protein belongs to the SHOC2 family. In terms of tissue distribution, widely expressed.

In terms of biological role, leucine-rich repeat protein that likely mediates protein interactions, possibly in the context of signal transduction. The chain is Plant intracellular Ras-group-related LRR protein 4 (PIRL4) from Arabidopsis thaliana (Mouse-ear cress).